The primary structure comprises 197 residues: UPF0725 protein At5g41640 (197 aa).

This sequence belongs to the UPF0725 (EMB2204) family.

In Arabidopsis thaliana (Mouse-ear cress), this protein is UPF0725 protein At5g41640.